A 480-amino-acid polypeptide reads, in one-letter code: Pyruvate kinase (480 aa).

R36 is a binding site for substrate. Residues N38, S40, and D70 each contribute to the K(+) site. 38–41 (NFSH) is an ATP binding site. ATP contacts are provided by R77 and K160. E225 provides a ligand contact to Mg(2+). G251, D252, and T284 together coordinate substrate. Position 252 (D252) interacts with Mg(2+).

The protein belongs to the pyruvate kinase family. In terms of assembly, homotetramer. The cofactor is Mg(2+). Requires K(+) as cofactor.

It catalyses the reaction pyruvate + ATP = phosphoenolpyruvate + ADP + H(+). Its pathway is carbohydrate degradation; glycolysis; pyruvate from D-glyceraldehyde 3-phosphate: step 5/5. Its activity is regulated as follows. Allosterically activated by AMP and by several sugar phosphates. Belongs to type II PK. The sequence is that of Pyruvate kinase (pykA) from Buchnera aphidicola subsp. Acyrthosiphon pisum (strain APS) (Acyrthosiphon pisum symbiotic bacterium).